The primary structure comprises 407 residues: DNA primase DnaG (407 aa).

One can recognise a Toprim domain in the interval 172–248 (DWIIVVEGRA…HIDYVARAPP (77 aa)). Residues E178, D222, and D224 each coordinate Mg(2+). Residues 279–304 (AGAEKTEAAAPPPQQPTAPPAAPSQQ) form a disordered region. Positions 288-300 (APPPQQPTAPPAA) are enriched in pro residues.

This sequence belongs to the archaeal DnaG primase family. In terms of assembly, forms a ternary complex with MCM helicase and DNA. Component of the archaeal exosome complex. Requires Mg(2+) as cofactor.

It catalyses the reaction ssDNA + n NTP = ssDNA/pppN(pN)n-1 hybrid + (n-1) diphosphate.. In terms of biological role, RNA polymerase that catalyzes the synthesis of short RNA molecules used as primers for DNA polymerase during DNA replication. Also part of the exosome, which is a complex involved in RNA degradation. Acts as a poly(A)-binding protein that enhances the interaction between heteromeric, adenine-rich transcripts and the exosome. The sequence is that of DNA primase DnaG from Pyrobaculum calidifontis (strain DSM 21063 / JCM 11548 / VA1).